The sequence spans 131 residues: Small ribosomal subunit protein eS8 (131 aa).

Residues 1 to 42 are disordered; it reads MKLGAYYKGGDLKKPSGGKKRKVRKTKKKALGGGPPQIPKLG. A compositionally biased stretch (basic residues) spans 16-30; it reads SGGKKRKVRKTKKKA.

Belongs to the eukaryotic ribosomal protein eS8 family. In terms of assembly, part of the 30S ribosomal subunit.

The sequence is that of Small ribosomal subunit protein eS8 from Pyrobaculum aerophilum (strain ATCC 51768 / DSM 7523 / JCM 9630 / CIP 104966 / NBRC 100827 / IM2).